The sequence spans 65 residues: Large ribosomal subunit protein bL35 (65 aa).

Belongs to the bacterial ribosomal protein bL35 family.

This is Large ribosomal subunit protein bL35 from Prochlorococcus marinus (strain MIT 9313).